The primary structure comprises 412 residues: Multifunctional CCA protein (412 aa).

Glycine 8 and arginine 11 together coordinate ATP. CTP contacts are provided by glycine 8 and arginine 11. Positions 21 and 23 each coordinate Mg(2+). 3 residues coordinate ATP: arginine 91, arginine 137, and arginine 140. Residues arginine 91, arginine 137, and arginine 140 each contribute to the CTP site. Positions 228-329 (TGIHTLMTLS…VKLFDSIDAW (102 aa)) constitute an HD domain.

The protein belongs to the tRNA nucleotidyltransferase/poly(A) polymerase family. Bacterial CCA-adding enzyme type 1 subfamily. As to quaternary structure, monomer. Can also form homodimers and oligomers. Mg(2+) is required as a cofactor. It depends on Ni(2+) as a cofactor.

It carries out the reaction a tRNA precursor + 2 CTP + ATP = a tRNA with a 3' CCA end + 3 diphosphate. The catalysed reaction is a tRNA with a 3' CCA end + 2 CTP + ATP = a tRNA with a 3' CCACCA end + 3 diphosphate. Functionally, catalyzes the addition and repair of the essential 3'-terminal CCA sequence in tRNAs without using a nucleic acid template. Adds these three nucleotides in the order of C, C, and A to the tRNA nucleotide-73, using CTP and ATP as substrates and producing inorganic pyrophosphate. tRNA 3'-terminal CCA addition is required both for tRNA processing and repair. Also involved in tRNA surveillance by mediating tandem CCA addition to generate a CCACCA at the 3' terminus of unstable tRNAs. While stable tRNAs receive only 3'-terminal CCA, unstable tRNAs are marked with CCACCA and rapidly degraded. The protein is Multifunctional CCA protein of Escherichia coli (strain K12 / MC4100 / BW2952).